Reading from the N-terminus, the 242-residue chain is Biosynthetic peptidoglycan transglycosylase (242 aa).

A helical transmembrane segment spans residues 19 to 39 (ILAALAVFWGGGIALFSVVPV).

This sequence belongs to the glycosyltransferase 51 family.

It is found in the cell inner membrane. It catalyses the reaction [GlcNAc-(1-&gt;4)-Mur2Ac(oyl-L-Ala-gamma-D-Glu-L-Lys-D-Ala-D-Ala)](n)-di-trans,octa-cis-undecaprenyl diphosphate + beta-D-GlcNAc-(1-&gt;4)-Mur2Ac(oyl-L-Ala-gamma-D-Glu-L-Lys-D-Ala-D-Ala)-di-trans,octa-cis-undecaprenyl diphosphate = [GlcNAc-(1-&gt;4)-Mur2Ac(oyl-L-Ala-gamma-D-Glu-L-Lys-D-Ala-D-Ala)](n+1)-di-trans,octa-cis-undecaprenyl diphosphate + di-trans,octa-cis-undecaprenyl diphosphate + H(+). Its pathway is cell wall biogenesis; peptidoglycan biosynthesis. Functionally, peptidoglycan polymerase that catalyzes glycan chain elongation from lipid-linked precursors. In Salmonella paratyphi B (strain ATCC BAA-1250 / SPB7), this protein is Biosynthetic peptidoglycan transglycosylase.